The primary structure comprises 123 residues: Small ribosomal subunit protein uS12 (123 aa).

Positions 1-25 (MPTINQLIRKRRKSSLARKKSPALQ) are disordered. Positions 8 to 21 (IRKRRKSSLARKKS) are enriched in basic residues. The residue at position 89 (Asp-89) is a 3-methylthioaspartic acid.

The protein belongs to the universal ribosomal protein uS12 family. Part of the 30S ribosomal subunit. Contacts proteins S8 and S17. May interact with IF1 in the 30S initiation complex.

In terms of biological role, with S4 and S5 plays an important role in translational accuracy. Its function is as follows. Interacts with and stabilizes bases of the 16S rRNA that are involved in tRNA selection in the A site and with the mRNA backbone. Located at the interface of the 30S and 50S subunits, it traverses the body of the 30S subunit contacting proteins on the other side and probably holding the rRNA structure together. The combined cluster of proteins S8, S12 and S17 appears to hold together the shoulder and platform of the 30S subunit. The polypeptide is Small ribosomal subunit protein uS12 (Chlamydia pneumoniae (Chlamydophila pneumoniae)).